Reading from the N-terminus, the 412-residue chain is 1-deoxy-D-xylulose 5-phosphate reductoisomerase (412 aa).

T5, G6, S7, I8, G31, N33, and N125 together coordinate NADPH. A 1-deoxy-D-xylulose 5-phosphate-binding site is contributed by K126. E127 is an NADPH binding site. D151 lines the Mn(2+) pocket. The 1-deoxy-D-xylulose 5-phosphate site is built by S152, E153, S189, and H212. Residue E153 participates in Mn(2+) binding. G218 lines the NADPH pocket. Residues S225, N230, K231, and E234 each coordinate 1-deoxy-D-xylulose 5-phosphate. E234 provides a ligand contact to Mn(2+).

The protein belongs to the DXR family. It depends on Mg(2+) as a cofactor. Mn(2+) is required as a cofactor.

The enzyme catalyses 2-C-methyl-D-erythritol 4-phosphate + NADP(+) = 1-deoxy-D-xylulose 5-phosphate + NADPH + H(+). The protein operates within isoprenoid biosynthesis; isopentenyl diphosphate biosynthesis via DXP pathway; isopentenyl diphosphate from 1-deoxy-D-xylulose 5-phosphate: step 1/6. In terms of biological role, catalyzes the NADPH-dependent rearrangement and reduction of 1-deoxy-D-xylulose-5-phosphate (DXP) to 2-C-methyl-D-erythritol 4-phosphate (MEP). The sequence is that of 1-deoxy-D-xylulose 5-phosphate reductoisomerase from Prochlorococcus marinus (strain MIT 9313).